The chain runs to 378 residues: Lipid-A-disaccharide synthase (378 aa).

It belongs to the LpxB family.

It carries out the reaction a lipid X + a UDP-2-N,3-O-bis[(3R)-3-hydroxyacyl]-alpha-D-glucosamine = a lipid A disaccharide + UDP + H(+). Its pathway is bacterial outer membrane biogenesis; LPS lipid A biosynthesis. Its function is as follows. Condensation of UDP-2,3-diacylglucosamine and 2,3-diacylglucosamine-1-phosphate to form lipid A disaccharide, a precursor of lipid A, a phosphorylated glycolipid that anchors the lipopolysaccharide to the outer membrane of the cell. The chain is Lipid-A-disaccharide synthase from Pseudomonas aeruginosa (strain LESB58).